A 685-amino-acid chain; its full sequence is DNA-directed RNA polymerase subunit beta' (685 aa).

Zn(2+) contacts are provided by Cys69, Cys71, Cys87, and Cys90. Residues Asp492, Asp494, and Asp496 each coordinate Mg(2+).

This sequence belongs to the RNA polymerase beta' chain family. RpoC1 subfamily. In plastids the minimal PEP RNA polymerase catalytic core is composed of four subunits: alpha, beta, beta', and beta''. When a (nuclear-encoded) sigma factor is associated with the core the holoenzyme is formed, which can initiate transcription. It depends on Mg(2+) as a cofactor. Zn(2+) serves as cofactor.

The protein localises to the plastid. The protein resides in the chloroplast. It carries out the reaction RNA(n) + a ribonucleoside 5'-triphosphate = RNA(n+1) + diphosphate. Functionally, DNA-dependent RNA polymerase catalyzes the transcription of DNA into RNA using the four ribonucleoside triphosphates as substrates. The chain is DNA-directed RNA polymerase subunit beta' from Dioscorea elephantipes (Elephant's foot yam).